The chain runs to 540 residues: Chaperonin GroEL (540 aa).

ATP is bound by residues 29–32, 86–90, G413, 476–478, and D492; these read TIGP, DGTTT, and NAA.

Belongs to the chaperonin (HSP60) family. Forms a cylinder of 14 subunits composed of two heptameric rings stacked back-to-back. Interacts with the co-chaperonin GroES.

The protein resides in the cytoplasm. It carries out the reaction ATP + H2O + a folded polypeptide = ADP + phosphate + an unfolded polypeptide.. In terms of biological role, together with its co-chaperonin GroES, plays an essential role in assisting protein folding. The GroEL-GroES system forms a nano-cage that allows encapsulation of the non-native substrate proteins and provides a physical environment optimized to promote and accelerate protein folding. This is Chaperonin GroEL from Staphylococcus saprophyticus subsp. saprophyticus (strain ATCC 15305 / DSM 20229 / NCIMB 8711 / NCTC 7292 / S-41).